A 312-amino-acid polypeptide reads, in one-letter code: HPr kinase/phosphorylase (312 aa).

Residues His139 and Lys160 contribute to the active site. 154–161 (GSSGVGKS) is a binding site for ATP. Ser161 is a binding site for Mg(2+). Catalysis depends on Asp178, which acts as the Proton acceptor; for phosphorylation activity. Proton donor; for dephosphorylation activity. An important for the catalytic mechanism of both phosphorylation and dephosphorylation region spans residues 202-211 (LEIRGLGIIN). Glu203 serves as a coordination point for Mg(2+). Arg244 is an active-site residue. The important for the catalytic mechanism of dephosphorylation stretch occupies residues 265 to 270 (PVRPGR).

It belongs to the HPrK/P family. As to quaternary structure, homohexamer. The cofactor is Mg(2+).

The enzyme catalyses [HPr protein]-L-serine + ATP = [HPr protein]-O-phospho-L-serine + ADP + H(+). It catalyses the reaction [HPr protein]-O-phospho-L-serine + phosphate + H(+) = [HPr protein]-L-serine + diphosphate. Catalyzes the ATP- as well as the pyrophosphate-dependent phosphorylation of a specific serine residue in HPr, a phosphocarrier protein of the phosphoenolpyruvate-dependent sugar phosphotransferase system (PTS). HprK/P also catalyzes the pyrophosphate-producing, inorganic phosphate-dependent dephosphorylation (phosphorolysis) of seryl-phosphorylated HPr (P-Ser-HPr). The two antagonistic activities of HprK/P are regulated by several intracellular metabolites, which change their concentration in response to the absence or presence of rapidly metabolisable carbon sources (glucose, fructose, etc.) in the growth medium. Therefore, by controlling the phosphorylation state of HPr, HPrK/P is a sensor enzyme that plays a major role in the regulation of carbon metabolism and sugar transport: it mediates carbon catabolite repression (CCR), and regulates PTS-catalyzed carbohydrate uptake and inducer exclusion. The protein is HPr kinase/phosphorylase of Listeria monocytogenes serotype 4b (strain CLIP80459).